The primary structure comprises 164 residues: PTS system sorbose-specific EIIB component (164 aa).

The 164-residue stretch at 1-164 (MIITLARVDD…AKIDEVFGKE (164 aa)) folds into the PTS EIIB type-4 domain. The active-site Pros-phosphohistidine intermediate is the histidine 14. Residue histidine 14 is modified to Phosphohistidine; by EIIA.

The protein resides in the cytoplasm. The enzyme catalyses keto-L-sorbose(out) + N(pros)-phospho-L-histidyl-[protein] = L-sorbose 1-phosphate(in) + L-histidyl-[protein]. The phosphoenolpyruvate-dependent sugar phosphotransferase system (PTS), a major carbohydrate active transport system, catalyzes the phosphorylation of incoming sugar substrates concomitant with their translocation across the cell membrane. The enzyme II SorABCD PTS system is involved in L-sorbose transport. In Lacticaseibacillus casei (Lactobacillus casei), this protein is PTS system sorbose-specific EIIB component.